The chain runs to 306 residues: tRNA pseudouridine synthase B (306 aa).

Asp48 serves as the catalytic Nucleophile.

The protein belongs to the pseudouridine synthase TruB family. Type 1 subfamily.

It catalyses the reaction uridine(55) in tRNA = pseudouridine(55) in tRNA. Its function is as follows. Responsible for synthesis of pseudouridine from uracil-55 in the psi GC loop of transfer RNAs. The polypeptide is tRNA pseudouridine synthase B (Ectopseudomonas mendocina (strain ymp) (Pseudomonas mendocina)).